The sequence spans 328 residues: NADH-quinone oxidoreductase subunit H (328 aa).

8 helical membrane-spanning segments follow: residues 10 to 30 (IIKI…GTYF), 80 to 100 (IAPV…PFLP), 118 to 138 (IGIL…LLGG), 155 to 175 (AVFI…IMMV), 191 to 211 (ITSW…IAAF), 243 to 263 (LFFI…SLLF), 272 to 292 (LLGA…FLWT), and 306 to 326 (WLCW…TAIV).

Belongs to the complex I subunit 1 family. NDH-1 is composed of 14 different subunits. Subunits NuoA, H, J, K, L, M, N constitute the membrane sector of the complex.

It is found in the cell inner membrane. It carries out the reaction a quinone + NADH + 5 H(+)(in) = a quinol + NAD(+) + 4 H(+)(out). Functionally, NDH-1 shuttles electrons from NADH, via FMN and iron-sulfur (Fe-S) centers, to quinones in the respiratory chain. The immediate electron acceptor for the enzyme in this species is believed to be ubiquinone. Couples the redox reaction to proton translocation (for every two electrons transferred, four hydrogen ions are translocated across the cytoplasmic membrane), and thus conserves the redox energy in a proton gradient. This subunit may bind ubiquinone. This Sulfurimonas denitrificans (strain ATCC 33889 / DSM 1251) (Thiomicrospira denitrificans (strain ATCC 33889 / DSM 1251)) protein is NADH-quinone oxidoreductase subunit H.